We begin with the raw amino-acid sequence, 277 residues long: Caspase-3 (277 aa).

M1 carries the post-translational modification N-acetylmethionine. 2 consecutive propeptides follow at residues M1–D9 and S10–D28. The residue at position 11 (K11) is an N6-acetyllysine. Position 26 is a phosphoserine (S26). Catalysis depends on residues H121 and C163. C163 bears the S-nitrosocysteine; in inhibited form mark.

It belongs to the peptidase C14A family. As to quaternary structure, heterotetramer that consists of two anti-parallel arranged heterodimers, each one formed by a 17 kDa (p17) and a 12 kDa (p12) subunit. Interacts with BIRC6/bruce. (Microbial infection) Subunit p17 interacts with African swine fever virus (ASFV) inhibitor of apoptosis protein. Cleavage by granzyme B, caspase-6, caspase-8 and caspase-10 generates the two active subunits. Additional processing of the propeptides is likely due to the autocatalytic activity of the activated protease. Active heterodimers between the small subunit of caspase-7 protease and the large subunit of caspase-3 also occur and vice versa. Post-translationally, S-nitrosylated on its catalytic site cysteine in unstimulated cell lines and denitrosylated upon activation of the Fas apoptotic pathway, associated with an increase in intracellular caspase activity. Fas therefore activates caspase-3 not only by inducing the cleavage of the caspase zymogen to its active subunits, but also by stimulating the denitrosylation of its active site thiol. In terms of processing, ubiquitinated by BIRC6; this activity is inhibited by DIABLO/SMAC.

It is found in the cytoplasm. It carries out the reaction Strict requirement for an Asp residue at positions P1 and P4. It has a preferred cleavage sequence of Asp-Xaa-Xaa-Asp-|- with a hydrophobic amino-acid residue at P2 and a hydrophilic amino-acid residue at P3, although Val or Ala are also accepted at this position.. Its activity is regulated as follows. Inhibited by BIRC6; following inhibition of BIRC6-caspase binding by DIABLO/SMAC, BIRC6 is subjected to caspase cleavage, leading to an increase in active caspases. In terms of biological role, involved in the activation cascade of caspases responsible for apoptosis execution. At the onset of apoptosis, it proteolytically cleaves poly(ADP-ribose) polymerase PARP1 at a '216-Asp-|-Gly-217' bond. Cleaves and activates sterol regulatory element binding proteins (SREBPs) between the basic helix-loop-helix leucine zipper domain and the membrane attachment domain. Cleaves and activates caspase-6, -7 and -9 (CASP6, CASP7 and CASP9, respectively). Cleaves and inactivates interleukin-18 (IL18). Triggers cell adhesion in sympathetic neurons through RET cleavage. Cleaves IL-1 beta between an Asp and an Ala, releasing the mature cytokine which is involved in a variety of inflammatory processes. Cleaves and inhibits serine/threonine-protein kinase AKT1 in response to oxidative stress. Acts as an inhibitor of type I interferon production during virus-induced apoptosis by mediating cleavage of antiviral proteins CGAS, IRF3 and MAVS, thereby preventing cytokine overproduction. Also involved in pyroptosis by mediating cleavage and activation of gasdermin-E (GSDME). Cleaves XRCC4 and phospholipid scramblase proteins XKR4, XKR8 and XKR9, leading to promote phosphatidylserine exposure on apoptotic cell surface. Cleaves BIRC6 following inhibition of BIRC6-caspase binding by DIABLO/SMAC. The chain is Caspase-3 (CASP3) from Sus scrofa (Pig).